The sequence spans 1233 residues: ATP-dependent helicase/nuclease subunit A (1233 aa).

The UvrD-like helicase ATP-binding domain occupies 3 to 474 (TKWTEEQKQA…ILLYKNFRSR (472 aa)). Residue 24–31 (AAAGSGKT) coordinates ATP. The UvrD-like helicase C-terminal domain maps to 518-809 (VTGGAVELHL…RIMSIHKSKG (292 aa)). Positions 533 to 555 (VEEEVEEKEEEKNEEKDFEEEEE) are disordered.

The protein belongs to the helicase family. AddA subfamily. Heterodimer of AddA and AddB/RexB. Mg(2+) is required as a cofactor.

The enzyme catalyses Couples ATP hydrolysis with the unwinding of duplex DNA by translocating in the 3'-5' direction.. It catalyses the reaction ATP + H2O = ADP + phosphate + H(+). In terms of biological role, the heterodimer acts as both an ATP-dependent DNA helicase and an ATP-dependent, dual-direction single-stranded exonuclease. Recognizes the chi site generating a DNA molecule suitable for the initiation of homologous recombination. The AddA nuclease domain is required for chi fragment generation; this subunit has the helicase and 3' -&gt; 5' nuclease activities. The chain is ATP-dependent helicase/nuclease subunit A from Thermoanaerobacter sp. (strain X514).